A 251-amino-acid polypeptide reads, in one-letter code: Aspartate/glutamate leucyltransferase (251 aa).

This sequence belongs to the R-transferase family. Bpt subfamily.

The protein localises to the cytoplasm. The catalysed reaction is N-terminal L-glutamyl-[protein] + L-leucyl-tRNA(Leu) = N-terminal L-leucyl-L-glutamyl-[protein] + tRNA(Leu) + H(+). It catalyses the reaction N-terminal L-aspartyl-[protein] + L-leucyl-tRNA(Leu) = N-terminal L-leucyl-L-aspartyl-[protein] + tRNA(Leu) + H(+). Functions in the N-end rule pathway of protein degradation where it conjugates Leu from its aminoacyl-tRNA to the N-termini of proteins containing an N-terminal aspartate or glutamate. In Xanthomonas axonopodis pv. citri (strain 306), this protein is Aspartate/glutamate leucyltransferase.